Consider the following 552-residue polypeptide: CTP synthase (552 aa).

An amidoligase domain region spans residues 1–270 (MTKFVFVTGG…DGLICDKLRL (270 aa)). A CTP-binding site is contributed by S13. Residue S13 coordinates UTP. Residues 14–19 (SLGKGI) and D71 each bind ATP. 2 residues coordinate Mg(2+): D71 and E144. CTP contacts are provided by residues 151–153 (DIE), 191–196 (KTKPTQ), and K227. UTP-binding positions include 191–196 (KTKPTQ) and K227. Positions 295 to 548 (KIAMVGKYVE…VKAAIERQKA (254 aa)) constitute a Glutamine amidotransferase type-1 domain. G357 contacts L-glutamine. The active-site Nucleophile; for glutamine hydrolysis is the C384. L-glutamine is bound by residues 385–388 (LGMQ), E408, and R474. Residues H521 and E523 contribute to the active site.

It belongs to the CTP synthase family. Homotetramer.

The enzyme catalyses UTP + L-glutamine + ATP + H2O = CTP + L-glutamate + ADP + phosphate + 2 H(+). The catalysed reaction is L-glutamine + H2O = L-glutamate + NH4(+). It carries out the reaction UTP + NH4(+) + ATP = CTP + ADP + phosphate + 2 H(+). The protein operates within pyrimidine metabolism; CTP biosynthesis via de novo pathway; CTP from UDP: step 2/2. Its activity is regulated as follows. Allosterically activated by GTP, when glutamine is the substrate; GTP has no effect on the reaction when ammonia is the substrate. The allosteric effector GTP functions by stabilizing the protein conformation that binds the tetrahedral intermediate(s) formed during glutamine hydrolysis. Inhibited by the product CTP, via allosteric rather than competitive inhibition. Functionally, catalyzes the ATP-dependent amination of UTP to CTP with either L-glutamine or ammonia as the source of nitrogen. Regulates intracellular CTP levels through interactions with the four ribonucleotide triphosphates. This is CTP synthase from Delftia acidovorans (strain DSM 14801 / SPH-1).